A 285-amino-acid chain; its full sequence is Bifunctional protein FolD (285 aa).

NADP(+) is bound by residues 164-166 (GRS), serine 189, and isoleucine 230.

Belongs to the tetrahydrofolate dehydrogenase/cyclohydrolase family. As to quaternary structure, homodimer.

It carries out the reaction (6R)-5,10-methylene-5,6,7,8-tetrahydrofolate + NADP(+) = (6R)-5,10-methenyltetrahydrofolate + NADPH. The catalysed reaction is (6R)-5,10-methenyltetrahydrofolate + H2O = (6R)-10-formyltetrahydrofolate + H(+). The protein operates within one-carbon metabolism; tetrahydrofolate interconversion. Functionally, catalyzes the oxidation of 5,10-methylenetetrahydrofolate to 5,10-methenyltetrahydrofolate and then the hydrolysis of 5,10-methenyltetrahydrofolate to 10-formyltetrahydrofolate. This chain is Bifunctional protein FolD, found in Oceanobacillus iheyensis (strain DSM 14371 / CIP 107618 / JCM 11309 / KCTC 3954 / HTE831).